The primary structure comprises 658 residues: MVMEIVKPNTCIRGCCTSESIPLHLPSSSFTLLSPIAKGSESVVYEAILDGRRVAAKKPILSTSDDLDKFHRNLQLSCNLNHPGVAKLLAAHAKPPNYMFFFDFYESGTLAEKLHVEEWSPSIDQVLLITLHLAKALQYLHNNGIVHRDVKPANVLLDEKFFPYLADFGLAEYKKNLREVNLQNWRSSGKPTGGFHKKNMVGTLIYMAPEILRKDMYTEKADIYSFGILINELLTGVVPYTDRRAEAQAHTVLEMNYTEQQLTVAIVSSGLRPALAEIGLHLPKSLLSLIQNCWESDPSKRPSSDNVVLELESIWEQVRGKQQGHLLEKTSNSQSDTDGADIIKNSGDYRDTVNWFSQGECLSKKSSVSTVFDVKLWSSSTDEPSRYVPVISCGSFATCGRRESMEDTHFIIPHMCNEESIHLFAIFDGHRGAAAAEFSAQVLPGLVQSLCSTSAGEALSQAFVRTDLAFRQELDSHRQSKRVSQKDWHPGCTAIASLLVENKLFVANVGDSRAILCRAGHPFALSKAHLATCIDERNRVIGEGGRIEWLVDTWRVAPAGLQVTRSIGDDDLKPAVTAEPEISETILSADDEFLVMASDGLWDVMNDEEVIGIIRDTVKEPSMCSKRLATEAAARGSGDNITVIVVFLRPVSTAERIY.

The Protein kinase domain occupies 30-314 (FTLLSPIAKG…DNVVLELESI (285 aa)). ATP is bound by residues 36 to 44 (IAKGSESVV) and K57. The active-site Proton acceptor is D149. Residues 392 to 648 (SCGSFATCGR…DNITVIVVFL (257 aa)) form the PPM-type phosphatase domain. D428, G429, D599, and D639 together coordinate Mn(2+).

The protein in the N-terminal section; belongs to the protein kinase superfamily. Ser/Thr protein kinase family. In the C-terminal section; belongs to the PP2C family. The cofactor is Mg(2+). Mn(2+) is required as a cofactor.

The catalysed reaction is L-seryl-[protein] + ATP = O-phospho-L-seryl-[protein] + ADP + H(+). The enzyme catalyses L-threonyl-[protein] + ATP = O-phospho-L-threonyl-[protein] + ADP + H(+). It catalyses the reaction O-phospho-L-seryl-[protein] + H2O = L-seryl-[protein] + phosphate. It carries out the reaction O-phospho-L-threonyl-[protein] + H2O = L-threonyl-[protein] + phosphate. This Arabidopsis thaliana (Mouse-ear cress) protein is Protein kinase and PP2C-like domain-containing protein.